Reading from the N-terminus, the 505-residue chain is MATIRADEISNIIRERIEQYNREVKIVNTGTVLQVGDGIARIYGLDEVMAGELVEFEEGTIGIALNLESKNVGVVLMGDGLLIQEGSSVKATGRIAQIPVSEAYLGRVINALAKPIDGRGEISSSESRLIESPAPGIISRRSVYEPLQTGLIAIDAMIPIGRGQRELIIGDRQTGKTAVATDTILNQQGNNVICVYVAIGQKASSVAQVVNALQERGAMEYTIVVAEAADSPATLQYLAPYTGAALAEYFMYRERHTLIIYDDPSKQAQAYRQMSLLLRRPPGREAYPGDVFYLHSRLLERAAKLSSRLGEGSMTALPIVETQSGDVSAYIPTNVISITDGQIFLSADLFNAGIRPAINVGISVSRVGSAAQIKAMKQVAGKLKLELAQFAELEAFAQFSSDLDKATQNQLARGQRLRELLKQSQAKPLTVAEQILTIYTGTNGYLDSFEIAQVRKFLDELRDYVKTRKPQFEEIISSTKIFTEEAQALLKDAIQEQKELFLVQE.

170–177 (GDRQTGKT) provides a ligand contact to ATP.

This sequence belongs to the ATPase alpha/beta chains family. As to quaternary structure, F-type ATPases have 2 components, CF(1) - the catalytic core - and CF(0) - the membrane proton channel. CF(1) has five subunits: alpha(3), beta(3), gamma(1), delta(1), epsilon(1). CF(0) has four main subunits: a, b, b' and c.

The protein localises to the plastid. Its subcellular location is the chloroplast thylakoid membrane. It carries out the reaction ATP + H2O + 4 H(+)(in) = ADP + phosphate + 5 H(+)(out). In terms of biological role, produces ATP from ADP in the presence of a proton gradient across the membrane. The alpha chain is a regulatory subunit. This Oenothera elata subsp. hookeri (Hooker's evening primrose) protein is ATP synthase subunit alpha, chloroplastic.